The following is a 528-amino-acid chain: Na(+)/H(+) antiporter NhaB (528 aa).

A run of 10 helical transmembrane segments spans residues 28 to 50 (FLVI…VLVV), 67 to 87 (PGGL…SQVL), 98 to 118 (LLLV…LFVF), 140 to 160 (AFLS…AVAV), 240 to 260 (FFLR…FTCF), 305 to 325 (ALIG…VGLI), 350 to 370 (EEAL…GVII), 391 to 411 (LVIF…VFVG), 449 to 469 (ATPN…APLI), and 476 to 496 (MVWM…MAIE).

Belongs to the NhaB Na(+)/H(+) (TC 2.A.34) antiporter family.

It localises to the cell inner membrane. The catalysed reaction is 2 Na(+)(in) + 3 H(+)(out) = 2 Na(+)(out) + 3 H(+)(in). Na(+)/H(+) antiporter that extrudes sodium in exchange for external protons. In Shewanella frigidimarina (strain NCIMB 400), this protein is Na(+)/H(+) antiporter NhaB.